A 455-amino-acid polypeptide reads, in one-letter code: Bifunctional protein GlmU (455 aa).

The segment at 1-230 is pyrophosphorylase; it reads MSNRFAVILA…VEETLGVNDR (230 aa). Residues 9-12, lysine 23, glutamine 73, and 78-79 contribute to the UDP-N-acetyl-alpha-D-glucosamine site; these read LAAG and GT. Mg(2+) is bound at residue aspartate 103. Glycine 140, glutamate 155, asparagine 170, and asparagine 228 together coordinate UDP-N-acetyl-alpha-D-glucosamine. Asparagine 228 is a Mg(2+) binding site. Residues 231-251 are linker; it reads VALAQAEQVMKRRINEAWMRK. The segment at 252 to 455 is N-acetyltransferase; the sequence is GVTFIDPEQT…KEHYVTKKNN (204 aa). Positions 333 and 351 each coordinate UDP-N-acetyl-alpha-D-glucosamine. The active-site Proton acceptor is the histidine 363. Tyrosine 366 and asparagine 377 together coordinate UDP-N-acetyl-alpha-D-glucosamine. Acetyl-CoA is bound by residues 386 to 387, alanine 423, and arginine 440; that span reads NY.

It in the N-terminal section; belongs to the N-acetylglucosamine-1-phosphate uridyltransferase family. The protein in the C-terminal section; belongs to the transferase hexapeptide repeat family. In terms of assembly, homotrimer. The cofactor is Mg(2+).

Its subcellular location is the cytoplasm. It catalyses the reaction alpha-D-glucosamine 1-phosphate + acetyl-CoA = N-acetyl-alpha-D-glucosamine 1-phosphate + CoA + H(+). The enzyme catalyses N-acetyl-alpha-D-glucosamine 1-phosphate + UTP + H(+) = UDP-N-acetyl-alpha-D-glucosamine + diphosphate. It participates in nucleotide-sugar biosynthesis; UDP-N-acetyl-alpha-D-glucosamine biosynthesis; N-acetyl-alpha-D-glucosamine 1-phosphate from alpha-D-glucosamine 6-phosphate (route II): step 2/2. The protein operates within nucleotide-sugar biosynthesis; UDP-N-acetyl-alpha-D-glucosamine biosynthesis; UDP-N-acetyl-alpha-D-glucosamine from N-acetyl-alpha-D-glucosamine 1-phosphate: step 1/1. Its pathway is bacterial outer membrane biogenesis; LPS lipid A biosynthesis. Functionally, catalyzes the last two sequential reactions in the de novo biosynthetic pathway for UDP-N-acetylglucosamine (UDP-GlcNAc). The C-terminal domain catalyzes the transfer of acetyl group from acetyl coenzyme A to glucosamine-1-phosphate (GlcN-1-P) to produce N-acetylglucosamine-1-phosphate (GlcNAc-1-P), which is converted into UDP-GlcNAc by the transfer of uridine 5-monophosphate (from uridine 5-triphosphate), a reaction catalyzed by the N-terminal domain. The sequence is that of Bifunctional protein GlmU from Halalkalibacterium halodurans (strain ATCC BAA-125 / DSM 18197 / FERM 7344 / JCM 9153 / C-125) (Bacillus halodurans).